The chain runs to 88 residues: Arminin 7965 (88 aa).

Residues 1–18 (MKTVFAILFLTFIAFTYA) form the signal peptide. Residues 19–57 (KSYEDVKEEIKNEVEREIFEDLEEESDVLDSNVRELNDA) constitute a propeptide that is removed on maturation. Position 85 is an alanine amide (Ala85).

It belongs to the arminin family. In terms of tissue distribution, expressed in entodermal epithelium along the body column.

Its subcellular location is the secreted. The protein localises to the target cell membrane. In terms of biological role, antimicrobial peptide with a broad-spectrum antimicrobial activity. Keeps its antibacterial activity under a wide range of salt concentrations that mimic physiological conditions of human blood, which is surprising, since Hydra is an obligate freshwater animal with nearly no salt tolerance. Does not affect red blood cells. This is Arminin 7965 from Hydra vulgaris (Hydra).